The following is a 379-amino-acid chain: Probable purine permease 11 (379 aa).

A run of 10 helical transmembrane segments spans residues 43 to 63 (WVLVSVNIFFLIGGQAASVLL), 76 to 96 (WMATLVQTAAFPILYIPLLLL), 114 to 134 (IVLIYVLLGVIIAGDNMLYSV), 144 to 164 (YSLICATQLAFNAVFSYFINA), 167 to 187 (FTALILNSVVLLSFSAALIAL), 203 to 223 (IVGFVCTLAASALYSLLLSLM), 239 to 259 (VLEMQIYTSLVATCVSVIGLF), 294 to 313 (VCSVGVVGLIFLVTSLFSNV), 314 to 330 (ISTLSLAVTPLAALVVF), and 334 to 354 (MSGVKIMAMLIAIWGFASYVY).

This sequence belongs to the purine permeases (TC 2.A.7.14) family. May form a complex with the potassium channel subunit KAT1.

Its subcellular location is the membrane. This Arabidopsis thaliana (Mouse-ear cress) protein is Probable purine permease 11 (PUP11).